The primary structure comprises 1233 residues: STE20-like serine/threonine-protein kinase (1233 aa).

The residue at position 14 (S14) is a Phosphoserine. Residues 34–292 enclose the Protein kinase domain; the sequence is WEIIGELGDG…TSQLLQHPFV (259 aa). ATP is bound by residues 40–48 and K63; that span reads LGDGAFGKV. The Proton acceptor role is filled by D155. T183 is modified (phosphothreonine). S189 carries the phosphoserine modification. The disordered stretch occupies residues 309 to 351; that stretch reads AEVTEEVEDGKEEDEEEEAENALPIPANKRASSDLSIASSEED. Acidic residues predominate over residues 312 to 328; sequence TEEVEDGKEEDEEEEAE. 7 positions are modified to phosphoserine: S340, S341, S344, S347, S348, S354, and S372. The span at 363–399 shows a compositional bias: basic and acidic residues; sequence VSERTEQSTSEDKFSNKILNEKPTTDGPEKAVDEHAS. Disordered regions lie at residues 363–453, 498–650, 663–761, and 772–791; these read VSER…ENNR, VSQE…SIEE, ALGS…SGDL, and AKDSGSVSLQETRRQKKTLK. Positions 432–441 are enriched in polar residues; sequence PDTQDQQTVD. Residues 518–529 are compositionally biased toward basic and acidic residues; the sequence is LTKEETQEKLGK. A phosphoserine mark is found at S543, S561, and S566. Over residues 598–607 the composition is skewed to basic and acidic residues; that stretch reads GGERVEDKQP. Residues 619-630 are compositionally biased toward polar residues; it reads QLTSTSETTRAT. Phosphoserine occurs at positions 643, 647, and 666. The span at 690-701 shows a compositional bias: low complexity; it reads AESQAPAASQPS. A compositionally biased stretch (polar residues) spans 746–761; it reads TDSGTGSTVENSSGDL. Phosphoserine is present on residues S775 and S777. Phosphothreonine is present on T812. S816 carries the post-translational modification Phosphoserine. Residues 824–1067 are a coiled coil; the sequence is LRRQELRELR…LKNRQTQERA (244 aa). One can recognise a UVR domain in the interval 873–908; the sequence is DQEIENLEKQQKQTIERLEQEHTNRLRDEAKRIKGE. The interval 944–963 is disordered; that stretch reads KRRKEELAQSQHAQEQEFVQ. Residues 954–963 show a composition bias toward low complexity; that stretch reads QHAQEQEFVQ. T1095 carries the phosphothreonine modification. Residues 1107 to 1181 are a coiled coil; that stretch reads AAQEEKRQKN…ELKEWREKLR (75 aa). The segment at 1109–1129 is disordered; it reads QEEKRQKNERMAQHQKHESQM.

Belongs to the protein kinase superfamily. STE Ser/Thr protein kinase family. STE20 subfamily. Proteolytically cleaved by caspase-3. In terms of processing, autophosphorylated. As to expression, ubiquitously expressed.

Its subcellular location is the cytoplasm. It catalyses the reaction L-seryl-[protein] + ATP = O-phospho-L-seryl-[protein] + ADP + H(+). The enzyme catalyses L-threonyl-[protein] + ATP = O-phospho-L-threonyl-[protein] + ADP + H(+). In terms of biological role, mediates apoptosis and actin stress fiber dissolution. The polypeptide is STE20-like serine/threonine-protein kinase (Slk) (Mus musculus (Mouse)).